We begin with the raw amino-acid sequence, 78 residues long: Acyl carrier protein 1 (78 aa).

One can recognise a Carrier domain in the interval 2 to 77 (STIEERVKKI…EAIDYIVAHQ (76 aa)). Position 37 is an O-(pantetheine 4'-phosphoryl)serine (Ser-37).

This sequence belongs to the acyl carrier protein (ACP) family. In terms of processing, 4'-phosphopantetheine is transferred from CoA to a specific serine of apo-ACP by AcpS. This modification is essential for activity because fatty acids are bound in thioester linkage to the sulfhydryl of the prosthetic group.

Its subcellular location is the cytoplasm. It functions in the pathway lipid metabolism; fatty acid biosynthesis. Its function is as follows. Carrier of the growing fatty acid chain in fatty acid biosynthesis. This Pseudomonas aeruginosa (strain ATCC 15692 / DSM 22644 / CIP 104116 / JCM 14847 / LMG 12228 / 1C / PRS 101 / PAO1) protein is Acyl carrier protein 1.